The sequence spans 365 residues: Aminotransferase poxL (365 aa).

Residue R92 coordinates pyridoxal 5'-phosphate. K193 carries the N6-(pyridoxal phosphate)lysine modification. E229 lines the pyridoxal 5'-phosphate pocket.

Belongs to the class-IV pyridoxal-phosphate-dependent aminotransferase family. Requires pyridoxal 5'-phosphate as cofactor.

The protein operates within secondary metabolite biosynthesis. Its function is as follows. Aminotransferase; part of the gene cluster that mediates the biosynthesis of oxaleimides, cytotoxic compounds containing an unusual disubstituted succinimide moiety. The first step of the pathway is provided by the HR-PKS poxF that serves in a new mode of collaborative biosynthesis with the PKS-NRPS poxE, by providing the olefin containing amino acid substrate via the synthesis of an ACP-bound dec-4-enoate. The cytochrome P450 monooxygenase poxM-catalyzed oxidation at the alpha-position creates the enzyme-bound 2-hydroxydec-4-enoyl-ACP thioester, which may be prone to spontaneous hydrolysis to yield 2-hydroxydec-4-enoic acid due to increased electrophilicity of the carbonyl. 2-hydroxydec-4-enoic acid can then be further oxidized by poxM to yield the alpha-ketoacid 2-oxodec-4-enoicacid, which is reductively aminated by the aminotransferase poxL to yield (S,E)-2-aminodec-4-enoic acid. The Hybrid PKS-NRPS synthetase poxE then performs condensation between the octaketide product of its PKS modules and the amino group of (S,E)-2-aminodec-4-enoic acid which is activated and incorporated by the adenylation domain. The resulting aminoacyl product can be cyclized by the Diels-Alderase PoxQ and reductively released by the reductive (R) domain of poxE to yield an aldehyde intermediate. The released aldehyde is then substrate for a Knoevenagel condensation by the hydrolyase poxO followed by an oxidation at the 5-position of the pyrrolidone ring. The presence of the olefin from the amino acid building block allows for migration of the substituted allyl group to occur. This allylic transposition reaction takes place in a conjugate addition, semipinacol-like fashion to yield a succinimide intermediate. Iterative two-electron oxidations of the C7 methyl of the succinimide intermediate to the carboxylic acid can be catalyzed by one of two remaining cytochrome P450 monooxygenasess poxC or poxD to yield oxaleimide A. Subsequent oxidation yields the maleimide scaffold oxaleimide I. Both oxaleimide A and oxaleimide I can undergo oxidative modifications in the decalin ring to yield the series of products oxaleimides B to H. The protein is Aminotransferase poxL of Penicillium oxalicum (strain 114-2 / CGMCC 5302) (Penicillium decumbens).